Consider the following 32-residue polypeptide: Delta-conotoxin EVIA (32 aa).

3 disulfides stabilise this stretch: Cys-3-Cys-21, Cys-10-Cys-25, and Cys-20-Cys-29. Pro-6 is subject to 4-hydroxyproline. Leu-32 bears the Leucine amide mark.

The protein belongs to the conotoxin O1 superfamily. In terms of tissue distribution, expressed by the venom duct.

Its subcellular location is the secreted. Functionally, delta-conotoxins bind to site 6 of voltage-gated sodium channels and inhibit the inactivation process. This toxin inhibits sodium channel inactivation in neuronal membranes from amphibians and mammals (Nav1.2a/SCN1A, Nav1.3/SCN3A and Nav1.6/SCN8A) upon binding to receptor site 6. The polypeptide is Delta-conotoxin EVIA (Conus ermineus (Agate cone)).